Here is a 260-residue protein sequence, read N- to C-terminus: uncharacterized protein (260 aa).

Positions 1-22 are cleaved as a signal peptide; the sequence is MGNIKSFALYISILLLIVVVAG. Cys23 is lipidated: N-palmitoyl cysteine. The S-diacylglycerol cysteine moiety is linked to residue Cys23.

Belongs to the staphylococcal tandem lipoprotein family.

It localises to the cell membrane. This is an uncharacterized protein from Staphylococcus aureus (strain MRSA252).